We begin with the raw amino-acid sequence, 377 residues long: Secreted LysM effector Lys2 (377 aa).

The N-terminal stretch at methionine 1–alanine 22 is a signal peptide. Residues threonine 104 to threonine 119 show a composition bias toward low complexity. Residues threonine 104–proline 124 form a disordered region. 2 consecutive LysM domains span residues lysine 135 to valine 182 and lysine 207 to valine 253.

The protein belongs to the secreted LysM effector family.

In terms of biological role, might have a role in sequestration of chitin oligosaccharides (breakdown products of fungal cell walls that are released during invasion and act as triggers of host immunity) to dampen host defense. The chain is Secreted LysM effector Lys2 from Pochonia chlamydosporia (strain 123) (Metacordyceps chlamydosporia).